The primary structure comprises 622 residues: Probable methionine--tRNA ligase, mitochondrial (622 aa).

A 'HIGH' region motif is present at residues proline 67–histidine 79. The 'KMSKS' region motif lies at lysine 366–serine 370. Lysine 369 contacts ATP. The segment at leucine 592–alanine 622 is disordered. Low complexity predominate over residues glycine 610–alanine 622.

This sequence belongs to the class-I aminoacyl-tRNA synthetase family.

It is found in the mitochondrion matrix. It carries out the reaction tRNA(Met) + L-methionine + ATP = L-methionyl-tRNA(Met) + AMP + diphosphate. The sequence is that of Probable methionine--tRNA ligase, mitochondrial from Neurospora crassa (strain ATCC 24698 / 74-OR23-1A / CBS 708.71 / DSM 1257 / FGSC 987).